A 262-amino-acid chain; its full sequence is Probable ketoamine kinase TTHA1179 (262 aa).

79 to 81 contacts ATP; that stretch reads AYL. Asp-172 functions as the Proton acceptor in the catalytic mechanism.

The protein belongs to the fructosamine kinase family.

The enzyme catalyses N(6)-(D-ribulosyl)-L-lysine + ATP = N(6)-(3-O-phospho-D-ribulosyl)-L-lysine + ADP + H(+). It catalyses the reaction N(6)-(D-erythrulosyl)-L-lysine + ATP = N(6)-(3-O-phospho-D-erythrulosyl)-L-lysine + ADP + H(+). The catalysed reaction is N(6)-D-ribulosyl-L-lysyl-[protein] + ATP = N(6)-(3-O-phospho-D-ribulosyl)-L-lysyl-[protein] + ADP + H(+). It carries out the reaction N(6)-(D-erythrulosyl)-L-lysyl-[protein] + ATP = N(6)-(3-O-phospho-D-erythrulosyl)-L-lysyl-[protein] + ADP + H(+). Its function is as follows. Ketoamine kinase that phosphorylates ketoamines, such as erythruloselysine and ribuloselysine, on the third carbon of the sugar moiety to generate ketoamine 3-phosphate. Has higher activity on free lysine (erythruloselysine and ribuloselysine), than on ribuloselysine and erythruloselysine residues on glycated proteins. The protein is Probable ketoamine kinase TTHA1179 of Thermus thermophilus (strain ATCC 27634 / DSM 579 / HB8).